The sequence spans 647 residues: DNA topoisomerase 3 (647 aa).

Residues 2–135 (TRLFIAEKPS…KKETVQRLLI (134 aa)) enclose the Toprim domain. 3 residues coordinate Mg(2+): Glu8, Asp104, and Asp106. In terms of domain architecture, Topo IA-type catalytic spans 156 to 608 (FIPLSVSALA…TLQGRLEQLI (453 aa)). The interval 195–200 (SVGRVQ) is interaction with DNA. Catalysis depends on Tyr332, which acts as the O-(5'-phospho-DNA)-tyrosine intermediate.

This sequence belongs to the type IA topoisomerase family. The cofactor is Mg(2+).

The enzyme catalyses ATP-independent breakage of single-stranded DNA, followed by passage and rejoining.. Functionally, releases the supercoiling and torsional tension of DNA, which is introduced during the DNA replication and transcription, by transiently cleaving and rejoining one strand of the DNA duplex. Introduces a single-strand break via transesterification at a target site in duplex DNA. The scissile phosphodiester is attacked by the catalytic tyrosine of the enzyme, resulting in the formation of a DNA-(5'-phosphotyrosyl)-enzyme intermediate and the expulsion of a 3'-OH DNA strand. The free DNA strand then undergoes passage around the unbroken strand, thus removing DNA supercoils. Finally, in the religation step, the DNA 3'-OH attacks the covalent intermediate to expel the active-site tyrosine and restore the DNA phosphodiester backbone. The polypeptide is DNA topoisomerase 3 (Vibrio cholerae serotype O1 (strain ATCC 39315 / El Tor Inaba N16961)).